The sequence spans 374 residues: uncharacterized protein (374 aa).

Positions 39–66 form a coiled coil; the sequence is RDVRKHLESRDAKQELIDSLEEAVRDSR.

This is an uncharacterized protein from Mycobacterium tuberculosis (strain CDC 1551 / Oshkosh).